We begin with the raw amino-acid sequence, 129 residues long: Lysozyme C (129 aa).

In terms of domain architecture, C-type lysozyme spans 1 to 129 (KIYKRCELAA…VSTWIKDCKL (129 aa)). Cystine bridges form between Cys-6-Cys-127, Cys-30-Cys-115, Cys-64-Cys-80, and Cys-76-Cys-94. Catalysis depends on residues Glu-35 and Asp-52.

Belongs to the glycosyl hydrolase 22 family. In terms of assembly, monomer.

The protein resides in the secreted. The enzyme catalyses Hydrolysis of (1-&gt;4)-beta-linkages between N-acetylmuramic acid and N-acetyl-D-glucosamine residues in a peptidoglycan and between N-acetyl-D-glucosamine residues in chitodextrins.. Lysozymes have primarily a bacteriolytic function; those in tissues and body fluids are associated with the monocyte-macrophage system and enhance the activity of immunoagents. The polypeptide is Lysozyme C (LYZ) (Ortalis vetula (Plain chachalaca)).